Reading from the N-terminus, the 460-residue chain is UDP-N-acetylmuramoylalanine--D-glutamate ligase (460 aa).

120–126 provides a ligand contact to ATP; sequence GSNGKTT.

This sequence belongs to the MurCDEF family.

The protein resides in the cytoplasm. The enzyme catalyses UDP-N-acetyl-alpha-D-muramoyl-L-alanine + D-glutamate + ATP = UDP-N-acetyl-alpha-D-muramoyl-L-alanyl-D-glutamate + ADP + phosphate + H(+). It functions in the pathway cell wall biogenesis; peptidoglycan biosynthesis. Cell wall formation. Catalyzes the addition of glutamate to the nucleotide precursor UDP-N-acetylmuramoyl-L-alanine (UMA). The polypeptide is UDP-N-acetylmuramoylalanine--D-glutamate ligase (Lactobacillus gasseri (strain ATCC 33323 / DSM 20243 / BCRC 14619 / CIP 102991 / JCM 1131 / KCTC 3163 / NCIMB 11718 / NCTC 13722 / AM63)).